The primary structure comprises 278 residues: Sulfur carrier protein FdhD (278 aa).

The active-site Cysteine persulfide intermediate is C117.

It belongs to the FdhD family.

The protein resides in the cytoplasm. In terms of biological role, required for formate dehydrogenase (FDH) activity. Acts as a sulfur carrier protein that transfers sulfur from IscS to the molybdenum cofactor prior to its insertion into FDH. This chain is Sulfur carrier protein FdhD, found in Variovorax paradoxus (strain S110).